Consider the following 594-residue polypeptide: Cytosolic Fe-S cluster assembly factor NAR1 (594 aa).

Cys-20, Cys-88, Cys-91, Cys-94, Cys-209, and Cys-264 together coordinate [4Fe-4S] cluster. The tract at residues 444-465 (RRARMSKSEDSSGASASSMAPA) is disordered. Positions 454 to 465 (SSGASASSMAPA) are enriched in low complexity. [4Fe-4S] cluster-binding residues include Cys-481 and Cys-485. Residues 492 to 511 (IAAPAPTSTPPAAPAPAHAA) are disordered.

This sequence belongs to the NARF family.

Its function is as follows. Component of the cytosolic Fe/S protein assembly machinery. Required for maturation of extramitochondrial Fe/S proteins. May play a role in the transfer of pre-assembled Fe/S clusters to target apoproteins. This Lodderomyces elongisporus (strain ATCC 11503 / CBS 2605 / JCM 1781 / NBRC 1676 / NRRL YB-4239) (Yeast) protein is Cytosolic Fe-S cluster assembly factor NAR1 (NAR1).